Consider the following 318-residue polypeptide: Olfactory receptor 5G26 (318 aa).

Residues 1–28 (MMHRNQTVVTEFFFTGLTSSFHLQIVLF) are Extracellular-facing. N5 carries an N-linked (GlcNAc...) asparagine glycan. The helical transmembrane segment at 29–49 (LTFLCVYLATLLGNLGMIILI) threads the bilayer. The Cytoplasmic segment spans residues 50–56 (HLDTRLH). The helical transmembrane segment at 57 to 77 (IPMYFFLSHLSFVDACSSSVI) threads the bilayer. Residues 78–93 (SPKMLSDMFVDKKVIS) are Extracellular-facing. The helical transmembrane segment at 94 to 114 (FLGCAIQLCLFSQFVVTECFL) threads the bilayer. C97 and C189 are disulfide-bonded. The Cytoplasmic segment spans residues 115–144 (LASMAYDRYVAICKPLLYTLIMSQRVCVQL). The helical transmembrane segment at 145 to 165 (VIGPYSIGFVSTMVHIISAFV) threads the bilayer. Topologically, residues 166–198 (LPYCGPNLINHFFCDLLPVLSLACANTQMKKRL) are extracellular. Residues 199-219 (LFIVAGILGVFSGIIILVSYV) form a helical membrane-spanning segment. Over 220–239 (YIAITILKISSADGRRKAFS) the chain is Cytoplasmic. The helical transmembrane segment at 240-260 (TCSSHLTAVSILYGTLFFIYV) threads the bilayer. Topologically, residues 261-271 (RPSSSFSLDIN) are extracellular. Residues 272 to 292 (KVVSLFYTTVIPMLNPFIYSL) form a helical membrane-spanning segment. At 293–318 (RNKEVKDALIRTFEKQFCYSFQDKIL) the chain is on the cytoplasmic side.

It belongs to the G-protein coupled receptor 1 family.

It is found in the cell membrane. Its function is as follows. Potential odorant receptor. This is Olfactory receptor 5G26 from Mus musculus (Mouse).